We begin with the raw amino-acid sequence, 232 residues long: Nucleoside diphosphate kinase 2, chloroplastic (232 aa).

The N-terminal 79 residues, 1 to 79 (MGCLSVVGAS…TRIFLPHLVA (79 aa)), are a transit peptide targeting the chloroplast. Residues Lys-92, Phe-140, Arg-168, Thr-174, Arg-185, and Asn-195 each contribute to the ATP site. His-198 functions as the Pros-phosphohistidine intermediate in the catalytic mechanism.

It belongs to the NDK family. Mg(2+) serves as cofactor.

The protein resides in the plastid. It localises to the chloroplast. The catalysed reaction is a 2'-deoxyribonucleoside 5'-diphosphate + ATP = a 2'-deoxyribonucleoside 5'-triphosphate + ADP. The enzyme catalyses a ribonucleoside 5'-diphosphate + ATP = a ribonucleoside 5'-triphosphate + ADP. In terms of biological role, major role in the synthesis of nucleoside triphosphates other than ATP. The ATP gamma phosphate is transferred to the NDP beta phosphate via a ping-pong mechanism, using a phosphorylated active-site intermediate. The sequence is that of Nucleoside diphosphate kinase 2, chloroplastic from Nicotiana tabacum (Common tobacco).